Consider the following 209-residue polypeptide: High frequency lysogenization protein HflD homolog (209 aa).

This sequence belongs to the HflD family.

It localises to the cytoplasm. It is found in the cell inner membrane. This is High frequency lysogenization protein HflD homolog from Marinomonas sp. (strain MWYL1).